A 237-amino-acid chain; its full sequence is MENASILIVDDEKAIVDMIKRVLEKEGYRNILDAASAEEAIPVVKANKVDLIVLDVMMGGMSGFEACTLIREYSDAPIFFLTARSSDADKLSGFAVGADDYITKPFNPLELAARIRAHLKRTYQSKETSSNQTYTYDYFTFSPQNAELIVGGEAVACSAQLLQLLQYFCEHPNVVLSKDQIYEKVWGYPSYGDNNTVMVHIRKLREKIERDPSNPEYIVTVRGLGYRFIPNPEGKRS.

A Response regulatory domain is found at 5-119 (SILIVDDEKA…ELAARIRAHL (115 aa)). A 4-aspartylphosphate modification is found at Asp55. A DNA-binding region (ompR/PhoB-type) is located at residues 131–230 (NQTYTYDYFT…VRGLGYRFIP (100 aa)).

Post-translationally, phosphorylated by YvrG.

Its subcellular location is the cytoplasm. Functionally, member of the two-component regulatory system YvrG/YvrH that positively regulates 7 transcriptional units (wprA, wapA-yxxG, dltABCDE, sunA, sunT-bdbA-yolJ-bdbB, sigO-rsoA, and sigX-rsiX), and negatively regulates the lytABC operon. This Bacillus subtilis (strain 168) protein is Transcriptional regulatory protein YvrH (yvrH).